The following is a 115-amino-acid chain: Non-specific lipid-transfer protein 4.2 (115 aa).

The N-terminal stretch at 1–25 is a signal peptide; the sequence is MARAAATQLVLVAMVAAMLIVATDA. Disulfide bonds link Cys29–Cys77, Cys39–Cys54, Cys55–Cys97, and Cys75–Cys111.

The protein belongs to the plant LTP family.

Plant non-specific lipid-transfer proteins transfer phospholipids as well as galactolipids across membranes. May play a role in wax or cutin deposition in the cell walls of expanding epidermal cells and certain secretory tissues. The polypeptide is Non-specific lipid-transfer protein 4.2 (LTP4.2) (Hordeum vulgare (Barley)).